Reading from the N-terminus, the 119-residue chain is Large ribosomal subunit protein uL22c (119 aa).

The protein belongs to the universal ribosomal protein uL22 family. Part of the 50S ribosomal subunit.

The protein resides in the plastid. The protein localises to the chloroplast. Functionally, this protein binds specifically to 23S rRNA. In terms of biological role, the globular domain of the protein is located near the polypeptide exit tunnel on the outside of the subunit, while an extended beta-hairpin is found that lines the wall of the exit tunnel in the center of the 70S ribosome. This is Large ribosomal subunit protein uL22c (rpl22) from Anthoceros angustus (Hornwort).